The primary structure comprises 617 residues: Pyrophosphate--fructose 6-phosphate 1-phosphotransferase subunit alpha 2 (617 aa).

It belongs to the phosphofructokinase type A (PFKA) family. PPi-dependent PFK group II subfamily. Clade 'Long' sub-subfamily. Tetramer of two alpha (regulatory) and two beta (catalytic) chains. Expressed in roots and specific parts such as the trichomes of leaves, cotyledon veins, as well as in stamen and gynoecium of flowers.

The protein localises to the cytoplasm. It participates in carbohydrate degradation; glycolysis; D-glyceraldehyde 3-phosphate and glycerone phosphate from D-glucose: step 3/4. Allosterically activated by fructose 2,6-bisphosphate. Functionally, regulatory subunit of pyrophosphate--fructose 6-phosphate 1-phosphotransferase. This is Pyrophosphate--fructose 6-phosphate 1-phosphotransferase subunit alpha 2 from Arabidopsis thaliana (Mouse-ear cress).